The following is an 806-amino-acid chain: Leucine--tRNA ligase (806 aa).

Residues 40 to 51 (PYPSGSGLHVGH) carry the 'HIGH' region motif. A 'KMSKS' region motif is present at residues 576-580 (KMSKS). Residue K579 participates in ATP binding.

Belongs to the class-I aminoacyl-tRNA synthetase family.

It is found in the cytoplasm. It carries out the reaction tRNA(Leu) + L-leucine + ATP = L-leucyl-tRNA(Leu) + AMP + diphosphate. The sequence is that of Leucine--tRNA ligase from Chlorobium phaeobacteroides (strain BS1).